A 1483-amino-acid chain; its full sequence is Guanylyl cyclase, membrane (1483 aa).

6 consecutive transmembrane segments (helical) span residues 50-70, 143-163, 168-188, 198-218, 219-239, and 242-262; these read ISII…YISP, FILR…TFTA, LWKL…LIFE, MVLL…PSML, ASGG…QIAG, and MVLL…ISRF. Residues 323–376 are disordered; the sequence is KKDEESNLTGKKQSKVVVSPPPPPTAAAPQQQDNEISTPQNSRKIVDPQSPSSL. The segment covering 355–376 has biased composition (polar residues); the sequence is DNEISTPQNSRKIVDPQSPSSL. In terms of domain architecture, Guanylate cyclase 1 spans 395–517; it reads TVLFCEIVNF…DTINTSSRMA (123 aa). Disordered regions lie at residues 598-619 and 672-838; these read NNTI…THPN and LTSP…GDDF. The span at 610–619 shows a compositional bias: polar residues; sequence GSATGPTHPN. Composition is skewed to low complexity over residues 672-684, 693-712, and 720-765; these read LTSP…PQQS, SPRL…SSST, and NNNN…NNNN. Positions 772 to 786 are enriched in polar residues; it reads SPISQNTTPTGSLSL. A run of 6 helical transmembrane segments spans residues 907–927, 982–1002, 1016–1036, 1040–1060, 1061–1081, and 1094–1114; these read ILAS…VDYF, IITG…YVVS, VVMV…SVPP, IPLD…CYNF, SGIK…FIEI, and IYLS…ITSY. Positions 1168 to 1296 constitute a Guanylate cyclase 2 domain; it reads TIFLSDIVGF…ESVQITQQME (129 aa). Residues Asp-1173, Ile-1174, and Asp-1217 each coordinate Mg(2+). Disordered regions lie at residues 1348–1369 and 1393–1483; these read QPEV…SLQY and NQND…SESS. The span at 1354-1369 shows a compositional bias: polar residues; it reads RSVSVSKSNFGGSLQY. Positions 1405 to 1416 are enriched in low complexity; it reads NENGNESSSSNI. A compositionally biased stretch (acidic residues) spans 1432–1444; sequence NEDDESSYEDDQE. Residues 1446 to 1465 are compositionally biased toward low complexity; sequence NQYLNNSENNKNNNNNSNQI.

It belongs to the adenylyl cyclase class-4/guanylyl cyclase family. Homodimer. Requires Mg(2+) as cofactor.

It is found in the membrane. The catalysed reaction is GTP = 3',5'-cyclic GMP + diphosphate. Its activity is regulated as follows. Activated by guanosine 5'-3-O-(thio)triphosphate (GTPgammaS). Inhibited by calcium. Functionally, synthesizes cyclic GMP (cGMP) from GTP, after activation by heterotrimeric or monomeric G proteins. Involved in chemotaxis. The sequence is that of Guanylyl cyclase, membrane (gca) from Dictyostelium discoideum (Social amoeba).